Reading from the N-terminus, the 354-residue chain is Ornithine transcarbamylase, mitochondrial (354 aa).

The N-terminal 32 residues, 1-32 (MLFNLKNLYRITKLTQNSKHLPRHFCRGPPNQ), are a transit peptide targeting the mitochondrion. Residues 90 to 94 (STRTR), R141, and H168 each bind carbamoyl phosphate. R141 serves as a coordination point for L-ornithine. L-ornithine is bound by residues N199, 263-267 (DTWIS), 302-305 (HCLP), and R330. Residue C303 is part of the active site. Residue R330 participates in carbamoyl phosphate binding.

This sequence belongs to the aspartate/ornithine carbamoyltransferase superfamily. OTCase family. As to quaternary structure, homotrimer. Post-translationally, cleavage of the precursor form to the active form occurs only in the kidney. In terms of tissue distribution, expressed in kidney, brain, heart, liver, pancreas, gizzard, small intestine and breast muscle. More abundant in mitochondrion-rich organs (heart, liver and brain) than in other organs. Activity is only detected in the kidney.

The protein localises to the mitochondrion matrix. It carries out the reaction carbamoyl phosphate + L-ornithine = L-citrulline + phosphate + H(+). It functions in the pathway nitrogen metabolism; urea cycle; L-citrulline from L-ornithine and carbamoyl phosphate: step 1/1. Inhibition by ornithine increases at higher pH. In terms of biological role, catalyzes the second step of the urea cycle, the condensation of carbamoyl phosphate with L-ornithine to form L-citrulline. The urea cycle ensures the detoxification of ammonia by converting it to urea for excretion. This chain is Ornithine transcarbamylase, mitochondrial, found in Gallus gallus (Chicken).